Here is a 1406-residue protein sequence, read N- to C-terminus: Receptor-type tyrosine-protein phosphatase eta (1406 aa).

Residues 1-24 form the signal peptide; it reads MRRLPLLPPCPLLLLLLLPAEVRC. Residues 25-1044 lie on the Extracellular side of the membrane; the sequence is TTACTDDCSL…LPQDPGVIAG (1020 aa). N-linked (GlcNAc...) asparagine glycosylation is found at Asn36, Asn52, Asn97, Asn103, Asn118, Asn124, Asn186, Asn192, Asn243, Asn275, Asn281, Asn296, Asn302, Asn331, Asn332, Asn364, Asn385, Asn391, Asn453, Asn459, Asn484, Asn500, Asn510, Asn547, Asn568, Asn630, Asn636, Asn651, Asn657, Asn719, Asn745, Asn750, Asn766, Asn776, Asn804, and Asn828. Positions 39–72 are disordered; sequence EEMGTSSNDELSVNATSGNRRLSEDVSLPGRAMS. Over residues 41–58 the composition is skewed to polar residues; the sequence is MGTSSNDELSVNATSGNR. Fibronectin type-III domains follow at residues 82-170, 171-259, 260-343, 346-437, 438-523, 524-614, 615-703, 704-793, 794-888, and 887-979; these read AVLD…TKPS, PVLD…TKPS, PVLD…SLNL, KPSP…TKPS, PVLD…SLYT, KPTP…TKPR, AVLH…TKPS, MVLN…VPSS, VNAF…TDPP, and PPVP…IVDV. Asn1010 is a glycosylation site (N-linked (GlcNAc...) asparagine). Residues 1045 to 1065 form a helical membrane-spanning segment; the sequence is AVIGCLLAILAVVAIGGYIFW. Topologically, residues 1066–1406 are cytoplasmic; sequence RRRRKDKRNT…AFGKANGYHA (341 aa). In terms of domain architecture, Tyrosine-protein phosphatase spans 1110 to 1367; it reads FAEEYEELKS…VFLNQCVMDI (258 aa). Residues Asp1274, 1308-1314, and Gln1352 each bind substrate; that span reads CSAGVGR. Residue Cys1308 is the Phosphocysteine intermediate of the active site.

It belongs to the protein-tyrosine phosphatase family. Receptor class 3 subfamily. In terms of tissue distribution, found on the apical surfaces of retinal Mueller cells, renal tubule cells and intestinal brush border cells.

The protein resides in the cell membrane. It is found in the cell projection. The protein localises to the ruffle membrane. It localises to the cell junction. It carries out the reaction O-phospho-L-tyrosyl-[protein] + H2O = L-tyrosyl-[protein] + phosphate. Functionally, tyrosine phosphatase which dephosphorylates or contributes to the dephosphorylation of several substrates. Plays a role in cell adhesion, migration, proliferation and differentiation. Has a role in megakaryocytes and platelet formation. May influence the potential of nonsensory supporting cells to either proliferate or differentiate into hair cells. This Gallus gallus (Chicken) protein is Receptor-type tyrosine-protein phosphatase eta (PTPRJ).